An 80-amino-acid polypeptide reads, in one-letter code: Small ribosomal subunit protein bS18 (80 aa).

The protein belongs to the bacterial ribosomal protein bS18 family. As to quaternary structure, part of the 30S ribosomal subunit. Forms a tight heterodimer with protein bS6.

Functionally, binds as a heterodimer with protein bS6 to the central domain of the 16S rRNA, where it helps stabilize the platform of the 30S subunit. The sequence is that of Small ribosomal subunit protein bS18 from Clostridium botulinum (strain 657 / Type Ba4).